A 198-amino-acid chain; its full sequence is MGKQKKTRKYATMKRMLSLRDERLKEKDRLKPKKKEKKDPSALKEREVPQHPSCLFFQYNTQLGPPYHILVDTNFINFSIKAKLDLVQSMMDCLYAKCIPCITDCVMAEIEKLGQKFRVALRIAKDPRFDRLPCTHKGTYADDCLVQRVTQHKCYIVATVDRDLKRRIRKIPGVPIMYLSNHRYNIERMPDDYGAPRF.

The segment at 22 to 47 (ERLKEKDRLKPKKKEKKDPSALKERE) is disordered. Residues 37-47 (KKDPSALKERE) are compositionally biased toward basic and acidic residues. The PINc domain maps to 67–166 (YHILVDTNFI…VATVDRDLKR (100 aa)).

It belongs to the UTP23/FCF1 family. FCF1 subfamily. Part of the small subunit (SSU) processome, composed of more than 70 proteins and the RNA chaperone small nucleolar RNA (snoRNA) U3.

Its subcellular location is the nucleus. It localises to the nucleolus. Its function is as follows. Part of the small subunit (SSU) processome, first precursor of the small eukaryotic ribosomal subunit. During the assembly of the SSU processome in the nucleolus, many ribosome biogenesis factors, an RNA chaperone and ribosomal proteins associate with the nascent pre-rRNA and work in concert to generate RNA folding, modifications, rearrangements and cleavage as well as targeted degradation of pre-ribosomal RNA by the RNA exosome. The sequence is that of rRNA-processing protein FCF1 homolog (Fcf1) from Mus musculus (Mouse).